We begin with the raw amino-acid sequence, 308 residues long: D-alanine--D-alanine ligase (308 aa).

The region spanning 103 to 302 is the ATP-grasp domain; that stretch reads KTVMKTAGVP…FDELVQWMVE (200 aa). ATP is bound at residue 130-184; sequence MEPPYVIKPVADGSSVGVYIITEQHQHPPQELFRDDWAYGDKLLVEKYVAGKELT. Asp252, Glu269, and Asn271 together coordinate Mg(2+).

This sequence belongs to the D-alanine--D-alanine ligase family. Mg(2+) serves as cofactor. Mn(2+) is required as a cofactor.

The protein localises to the cytoplasm. It carries out the reaction 2 D-alanine + ATP = D-alanyl-D-alanine + ADP + phosphate + H(+). The protein operates within cell wall biogenesis; peptidoglycan biosynthesis. In terms of biological role, cell wall formation. The protein is D-alanine--D-alanine ligase of Rhodopseudomonas palustris (strain BisA53).